The sequence spans 874 residues: Alanine--tRNA ligase (874 aa).

The Zn(2+) site is built by His-563, His-567, Cys-665, and His-669.

This sequence belongs to the class-II aminoacyl-tRNA synthetase family. The cofactor is Zn(2+).

The protein localises to the cytoplasm. It catalyses the reaction tRNA(Ala) + L-alanine + ATP = L-alanyl-tRNA(Ala) + AMP + diphosphate. Catalyzes the attachment of alanine to tRNA(Ala) in a two-step reaction: alanine is first activated by ATP to form Ala-AMP and then transferred to the acceptor end of tRNA(Ala). Also edits incorrectly charged Ser-tRNA(Ala) and Gly-tRNA(Ala) via its editing domain. In Haemophilus influenzae (strain PittGG), this protein is Alanine--tRNA ligase.